Consider the following 387-residue polypeptide: 3-ketoacyl-CoA thiolase (387 aa).

Cys-91 (acyl-thioester intermediate) is an active-site residue. Residues His-343 and Cys-373 each act as proton acceptor in the active site.

The protein belongs to the thiolase-like superfamily. Thiolase family. Heterotetramer of two alpha chains (FadB) and two beta chains (FadA).

It is found in the cytoplasm. The enzyme catalyses an acyl-CoA + acetyl-CoA = a 3-oxoacyl-CoA + CoA. The protein operates within lipid metabolism; fatty acid beta-oxidation. Functionally, catalyzes the final step of fatty acid oxidation in which acetyl-CoA is released and the CoA ester of a fatty acid two carbons shorter is formed. In Enterobacter sp. (strain 638), this protein is 3-ketoacyl-CoA thiolase.